A 411-amino-acid polypeptide reads, in one-letter code: Transforming growth factor beta regulator 1 (411 aa).

2 disordered regions span residues M1 to S29 and G119 to E146. S2 is subject to N-acetylserine. S10 bears the Phosphoserine mark. The 60-residue stretch at V182–G241 folds into the FYR N-terminal domain. Residues G242–K321 form the FYR C-terminal domain.

This sequence belongs to the TBRG1 family. As to quaternary structure, interacts with CDKN2A and MDM2. In terms of processing, ubiquitinated; mediated by MDM2 and leading to its subsequent proteasomal degradation. Widely expressed at low levels in most tissues, with highest levels in pancreas, lung and liver. Expression is decreased in primary tumors including lung, liver, breast, pancreas and kidney carcinomas, chronic lymphocytic leukemia and diffuse large B-cell lymphoma.

It is found in the nucleus. In terms of biological role, acts as a growth inhibitor. Can activate p53/TP53, causes G1 arrest and collaborates with CDKN2A to restrict proliferation, but does not require either protein to inhibit DNA synthesis. Redistributes CDKN2A into the nucleoplasm. Involved in maintaining chromosomal stability. The chain is Transforming growth factor beta regulator 1 (TBRG1) from Homo sapiens (Human).